Reading from the N-terminus, the 373-residue chain is WAT1-related protein At4g08300 (373 aa).

10 consecutive transmembrane segments (helical) span residues 11–31 (PIIA…ITMV), 41–61 (ILAT…ALIL), 67–87 (PKMT…EPLL), 102–122 (TYSS…AVIF), 139–159 (IGTA…GPAI), 185–205 (WVTG…FFIL), 219–239 (LVMW…LIMV), 255–275 (AAVY…SIVI), 281–301 (VFTT…GVLV), and 306–326 (IHLG…SVVW). 2 consecutive EamA domains span residues 23–151 (AGMY…AMVM) and 198–325 (TWAG…YSVV).

Belongs to the drug/metabolite transporter (DMT) superfamily. Plant drug/metabolite exporter (P-DME) (TC 2.A.7.4) family.

It is found in the membrane. The polypeptide is WAT1-related protein At4g08300 (Arabidopsis thaliana (Mouse-ear cress)).